The primary structure comprises 615 residues: Forkhead box protein O (615 aa).

Disordered regions lie at residues 39–77, 182–205, 217–269, 318–359, and 389–409; these read RARS…DSQQ, KSVR…RAKK, GLND…RLSP, FSAA…APGY, and NSVT…SDSL. The residue at position 44 (T44) is a Phosphothreonine; by PKB/AKT1. A compositionally biased stretch (polar residues) spans 63-77; sequence TKASNQQLAPGDSQQ. S75 bears the Phosphoserine mark. Residues 95 to 201 constitute a DNA-binding region (fork-head); the sequence is WGNLSYADLI…ETSRYEKRRG (107 aa). The residue at position 190 (S190) is a Phosphoserine; by PKB/AKT1. Polar residues-rich tracts occupy residues 221–230 and 256–265; these read ATPSPSSSVS and RASSNASSCG. S259 is modified (phosphoserine; by PKB/AKT1). Phosphoserine occurs at positions 262, 263, and 268. Residues 326-335 are compositionally biased toward pro residues; that stretch reads SQPPPPPYQP. Residues 336–351 are compositionally biased toward low complexity; the sequence is PQHQQAQQQQQQSPYA.

Interacts with melt.

The protein resides in the cytoplasm. Its subcellular location is the nucleus. Transcription factor involved in the regulation of the insulin signaling pathway. Consistently activates both the downstream target Thor\d4EBP and the feedback control target InR. Involved in negative regulation of the cell cycle, modulating cell growth and proliferation. In response to cellular stresses, such as nutrient deprivation or increased levels of reactive oxygen species, foxo is activated and inhibits growth through the action of target genes such as Thor. Foxo activated in the adult fat body can regulate lifespan in adults; an insulin peptide itself may function as one secondary messenger of insulin-regulated aging. Also regulates Lip4, homolog of human acid lipases, thereby acting as a key modulator of lipid metabolism by insulin signaling and integrates insulin responses to glucose and lipid homeostasis. The polypeptide is Forkhead box protein O (Drosophila erecta (Fruit fly)).